The sequence spans 231 residues: uncharacterized protein (231 aa).

6 helical membrane passes run Tyr4–Ser24, Ser29–Gly49, Ala58–Leu78, Thr95–Gly115, Val147–Leu167, and Leu211–Val231.

This sequence belongs to the YohK (E.coli)/YwbG (IPA-22R) (B.subtilis) family.

It is found in the cell membrane. This is an uncharacterized protein from Haemophilus influenzae (strain ATCC 51907 / DSM 11121 / KW20 / Rd).